Consider the following 37-residue polypeptide: Conotoxin Bt1.8 (37 aa).

The propeptide occupies 1-20 (PDGRNAAAKAFDLITPTVRK). Cystine bridges form between cysteine 22–cysteine 28 and cysteine 23–cysteine 36. Cysteine amide is present on cysteine 36.

It belongs to the conotoxin A superfamily. As to expression, expressed by the venom duct.

It localises to the secreted. Its function is as follows. Alpha-conotoxins bind to the nicotinic acetylcholine receptors (nAChR) and inhibit them. This toxin inhibits mammalian alpha-3-beta-2/CHRNA3-CHRNB2 nAChR (IC(50)=9.4 nM (rat), IC(50)=8.8 nM (human)), as well as the subunit chimera alpha-6/alpha-3-beta-2-beta-3 nAChR (CHRNA6/CHRNA3-CHRNB2-CHRNB3)(IC(50)=2.1 nM (rat), IC(50)=1.7 nM (human)). Binds to rat alpha-6/alpha-3-beta-2-beta-3 more rapidly than to alpha-3-beta-2, and dissociates more rapidly from alpha-3-beta-2 than from alpha-6/alpha-3-beta-2-beta-3. The protein is Conotoxin Bt1.8 of Conus betulinus (Beech cone).